The sequence spans 430 residues: Delta-aminolevulinic acid dehydratase 1, chloroplastic (430 aa).

The N-terminal 52 residues, 1-52 (MATTPIFNASCSFPSTRGIDCKSYIGLRSNVSKVSVASSRIATSQRRNLVVR), are a transit peptide targeting the chloroplast. A compositionally biased stretch (pro residues) spans 82-91 (EAPPVPPKPA). The tract at residues 82 to 101 (EAPPVPPKPAAPVGTPIIKP) is disordered. The active-site Schiff-base intermediate with substrate is Lys-298. 5-aminolevulinate-binding residues include Arg-308 and Lys-320. Glu-336 contributes to the Mg(2+) binding site. The active-site Schiff-base intermediate with substrate is the Lys-351. 5-aminolevulinate-binding residues include Ser-377 and Tyr-416.

The protein belongs to the ALAD family. In terms of assembly, homooctamer. Requires Mg(2+) as cofactor. As to expression, highly expressed in cotyledons during dark-to-light transition.

It is found in the plastid. It localises to the chloroplast. The catalysed reaction is 2 5-aminolevulinate = porphobilinogen + 2 H2O + H(+). The protein operates within porphyrin-containing compound metabolism; protoporphyrin-IX biosynthesis; coproporphyrinogen-III from 5-aminolevulinate: step 1/4. Its pathway is porphyrin-containing compound metabolism; chlorophyll biosynthesis. Functionally, catalyzes an early step in the biosynthesis of tetrapyrroles. Binds two molecules of 5-aminolevulinate per subunit, each at a distinct site, and catalyzes their condensation to form porphobilinogen. In Arabidopsis thaliana (Mouse-ear cress), this protein is Delta-aminolevulinic acid dehydratase 1, chloroplastic (HEMB1).